The following is a 500-amino-acid chain: Probable cation transporter HKT1;4 (500 aa).

Topologically, residues Met-1–Ala-12 are cytoplasmic. 2 helical membrane-spanning segments follow: residues Leu-13–Val-33 and Leu-74–Leu-94. Topologically, residues Ala-95–Arg-156 are cytoplasmic. The interval Ala-121–Met-145 is disordered. The next 2 helical transmembrane spans lie at Ala-157–Val-177 and Val-239–Ala-259. The Cytoplasmic portion of the chain corresponds to Ala-260–Cys-290. 2 helical membrane passes run Trp-291–Met-311 and Leu-346–Tyr-366. Topologically, residues Thr-367–Leu-390 are cytoplasmic. The next 2 membrane-spanning stretches (helical) occupy residues Leu-391–Ile-411 and Gly-464–Gly-484. Residues Arg-485–Ser-500 lie on the Cytoplasmic side of the membrane.

Belongs to the TrkH potassium transport family. HKT (TC 2.A.38.3) subfamily.

It localises to the membrane. Its function is as follows. Probable cation transporter. May be involved in regulation of potassium-sodium homeostasis. In Oryza sativa subsp. japonica (Rice), this protein is Probable cation transporter HKT1;4.